Consider the following 247-residue polypeptide: GTP cyclohydrolase 1 type 2 homolog (247 aa).

A divalent metal cation contacts are provided by His-63, His-64, Asp-101, His-215, and Glu-219.

This sequence belongs to the GTP cyclohydrolase I type 2/NIF3 family. Toroid-shaped homohexamer. In the hexamer, 3 dimers assemble to form a ring-like structure surrounding a central hole.

Functionally, provides significant protection from radiation damage and may be involved in the degradation of radiation-damaged nucleotides. The polypeptide is GTP cyclohydrolase 1 type 2 homolog (ybgI) (Escherichia coli O157:H7).